Here is a 203-residue protein sequence, read N- to C-terminus: Thymidylate kinase (203 aa).

Residue 14–21 (GGEGIGKS) participates in ATP binding.

The protein belongs to the thymidylate kinase family.

It catalyses the reaction dTMP + ATP = dTDP + ADP. In terms of biological role, phosphorylation of dTMP to form dTDP in both de novo and salvage pathways of dTTP synthesis. This is Thymidylate kinase from Rickettsia peacockii (strain Rustic).